The following is a 622-amino-acid chain: Chaperone protein HscA homolog (622 aa).

It belongs to the heat shock protein 70 family.

Functionally, chaperone involved in the maturation of iron-sulfur cluster-containing proteins. Has a low intrinsic ATPase activity which is markedly stimulated by HscB. This Burkholderia cenocepacia (strain HI2424) protein is Chaperone protein HscA homolog.